Consider the following 347-residue polypeptide: GMP reductase (347 aa).

NADP(+) is bound at residue 108 to 131; the sequence is AEFEKVKKIMALSEEFVFICIDIA. The K(+) site is built by G181 and G183. The active-site Thioimidate intermediate is C186. 216–239 provides a ligand contact to NADP(+); the sequence is IIGDGGCSCAGDVSKAFGGGADFV.

This sequence belongs to the IMPDH/GMPR family. GuaC type 1 subfamily. In terms of assembly, homotetramer.

The catalysed reaction is IMP + NH4(+) + NADP(+) = GMP + NADPH + 2 H(+). Catalyzes the irreversible NADPH-dependent deamination of GMP to IMP. It functions in the conversion of nucleobase, nucleoside and nucleotide derivatives of G to A nucleotides, and in maintaining the intracellular balance of A and G nucleotides. This is GMP reductase from Vibrio atlanticus (strain LGP32) (Vibrio splendidus (strain Mel32)).